Consider the following 220-residue polypeptide: MIDELLCLNNLVISVESNKNLRNDDCGNSASIIPSSMASRIFSQYSAFFSVFYGDENVCVGTDSWSLTHSITLFVPLISEPPLEFYTFFSNGLTRLQNVLQSFSAYLDEDLSTLNSENNFHRWQWLSLQKSIPSILSSYCYQKILVNQSKQRSNITSANPHPLNPIHPVKVGILRDYHTHPMSPHARKMQRVRGFEVVSKHELLHEVVILSFNRNNPEKA.

This is an uncharacterized protein from Archaeoglobus fulgidus (strain ATCC 49558 / DSM 4304 / JCM 9628 / NBRC 100126 / VC-16).